Consider the following 414-residue polypeptide: Gamma-glutamyl phosphate reductase (414 aa).

It belongs to the gamma-glutamyl phosphate reductase family.

It localises to the cytoplasm. It carries out the reaction L-glutamate 5-semialdehyde + phosphate + NADP(+) = L-glutamyl 5-phosphate + NADPH + H(+). The protein operates within amino-acid biosynthesis; L-proline biosynthesis; L-glutamate 5-semialdehyde from L-glutamate: step 2/2. Functionally, catalyzes the NADPH-dependent reduction of L-glutamate 5-phosphate into L-glutamate 5-semialdehyde and phosphate. The product spontaneously undergoes cyclization to form 1-pyrroline-5-carboxylate. This Xanthomonas axonopodis pv. citri (strain 306) protein is Gamma-glutamyl phosphate reductase.